A 352-amino-acid polypeptide reads, in one-letter code: Transcription factor BHLH156 (352 aa).

Residues 59–141 are disordered; it reads GGDDDDNGGV…RSKTIVSERK (83 aa). The tract at residues 130–143 is basic motif; the sequence is RDRSKTIVSERKRR. In terms of domain architecture, bHLH spans 130–179; the sequence is RDRSKTIVSERKRRVRMKEKLYELRALVPNITKMDKASIIADAVVYVKDL. Residues 144-179 form a helix-loop-helix motif region; the sequence is VRMKEKLYELRALVPNITKMDKASIIADAVVYVKDL. The disordered stretch occupies residues 194–216; that stretch reads EEARPIRPPPPSAAAQRPQRQPR. Residues 206–216 are compositionally biased toward low complexity; sequence AAAQRPQRQPR.

It belongs to the bHLH protein family. As to quaternary structure, forms homodimers. Interacts with IRO2 in the nucleus. As to expression, expressed in the meristematic zone of lateral and primary roots.

It localises to the nucleus. In terms of biological role, transcription factor involved in positive regulation of genes involved in strategy II iron acquisition, including genes for mugineic acid (MA) family phytosiderophores biosynthesis, and genes involved in S-adenosylmethionine cycle and iron transport. May play a role in the regulation of iron deficiency response by promoting the nuclear localization of IRO2. Possesses transactivation activity in yeast. This chain is Transcription factor BHLH156, found in Oryza sativa subsp. japonica (Rice).